We begin with the raw amino-acid sequence, 145 residues long: Hemoglobin subunit beta (145 aa).

The 145-residue stretch at 1-145 folds into the Globin domain; it reads MLTAEEKAAV…VANALAHRYH (145 aa). Thr-11 is subject to Phosphothreonine. Ser-43 bears the Phosphoserine mark. At Lys-58 the chain carries N6-acetyllysine. His-62 provides a ligand contact to heme b. Lys-81 is subject to N6-acetyllysine. His-91 provides a ligand contact to heme b. Cys-92 is modified (S-nitrosocysteine).

This sequence belongs to the globin family. Heterotetramer of two alpha chains and two beta chains. As to expression, red blood cells.

In terms of biological role, involved in oxygen transport from the lung to the various peripheral tissues. This is Hemoglobin subunit beta (HBB) from Bos mutus grunniens (Wild yak).